The primary structure comprises 279 residues: Phosphate-binding protein PstS (279 aa).

A signal peptide spans Met1–Asn18. The N-palmitoyl cysteine moiety is linked to residue Cys19. A lipid anchor (S-diacylglycerol cysteine) is attached at Cys19. Residues Ser33 to Thr35, Ser63, and Ser151 to Ser153 contribute to the phosphate site.

Belongs to the PstS family. Monomer (in vitro). The complex is composed of two ATP-binding proteins (PstB), two transmembrane proteins (PstC and PstA) and a solute-binding protein (PstS).

It localises to the cell membrane. Functionally, binds inorganic phosphate with a Kd of 1.2 uM. Part of the ABC transporter complex PstSACB involved in phosphate import. In Borreliella burgdorferi (strain ATCC 35210 / DSM 4680 / CIP 102532 / B31) (Borrelia burgdorferi), this protein is Phosphate-binding protein PstS.